A 201-amino-acid chain; its full sequence is Holliday junction branch migration complex subunit RuvA (201 aa).

The segment at 1–64 is domain I; that stretch reads MFAFLRGELV…EDAQQLFGFL (64 aa). The segment at 65–143 is domain II; sequence DEEELQLFRL…KIQPAASGKT (79 aa). The flexible linker stretch occupies residues 144–154; it reads AGAPQALQLNE. The tract at residues 154 to 201 is domain III; the sequence is EDALAALMTLGFPKPAAQKAISGILETSPGLSVEEVVRAALIAIHNNF.

The protein belongs to the RuvA family. As to quaternary structure, homotetramer. Forms an RuvA(8)-RuvB(12)-Holliday junction (HJ) complex. HJ DNA is sandwiched between 2 RuvA tetramers; dsDNA enters through RuvA and exits via RuvB. An RuvB hexamer assembles on each DNA strand where it exits the tetramer. Each RuvB hexamer is contacted by two RuvA subunits (via domain III) on 2 adjacent RuvB subunits; this complex drives branch migration. In the full resolvosome a probable DNA-RuvA(4)-RuvB(12)-RuvC(2) complex forms which resolves the HJ.

It localises to the cytoplasm. In terms of biological role, the RuvA-RuvB-RuvC complex processes Holliday junction (HJ) DNA during genetic recombination and DNA repair, while the RuvA-RuvB complex plays an important role in the rescue of blocked DNA replication forks via replication fork reversal (RFR). RuvA specifically binds to HJ cruciform DNA, conferring on it an open structure. The RuvB hexamer acts as an ATP-dependent pump, pulling dsDNA into and through the RuvAB complex. HJ branch migration allows RuvC to scan DNA until it finds its consensus sequence, where it cleaves and resolves the cruciform DNA. This chain is Holliday junction branch migration complex subunit RuvA, found in Chlorobaculum tepidum (strain ATCC 49652 / DSM 12025 / NBRC 103806 / TLS) (Chlorobium tepidum).